The chain runs to 102 residues: Cysteine-rich venom protein VAR9 (102 aa).

The signal sequence occupies residues 1–19 (MILLKLYLTLAAILCQSRG). The SCP domain maps to 41-80 (NKHNDLRRTVDPPAKNMLKMSWDNIIAESAKRAALRCNYK).

This sequence belongs to the CRISP family. Contains 8 disulfide bonds. Expressed by the venom gland.

It localises to the secreted. Its function is as follows. Blocks ryanodine receptors, and potassium channels. This is Cysteine-rich venom protein VAR9 from Varanus varius (Lace monitor lizard).